We begin with the raw amino-acid sequence, 70 residues long: DNA-directed RNA polymerase subunit epsilon (70 aa).

The protein belongs to the RNA polymerase subunit epsilon family. As to quaternary structure, RNAP is composed of a core of 2 alpha, a beta and a beta' subunit. The core is associated with a delta subunit, and at least one of epsilon or omega. When a sigma factor is associated with the core the holoenzyme is formed, which can initiate transcription.

The catalysed reaction is RNA(n) + a ribonucleoside 5'-triphosphate = RNA(n+1) + diphosphate. Functionally, a non-essential component of RNA polymerase (RNAP). In Enterococcus faecalis (strain ATCC 700802 / V583), this protein is DNA-directed RNA polymerase subunit epsilon.